Reading from the N-terminus, the 302-residue chain is Bifunctional protein FolD (302 aa).

Residues 165 to 167 (GRS), S190, and I231 contribute to the NADP(+) site.

The protein belongs to the tetrahydrofolate dehydrogenase/cyclohydrolase family. In terms of assembly, homodimer.

The enzyme catalyses (6R)-5,10-methylene-5,6,7,8-tetrahydrofolate + NADP(+) = (6R)-5,10-methenyltetrahydrofolate + NADPH. The catalysed reaction is (6R)-5,10-methenyltetrahydrofolate + H2O = (6R)-10-formyltetrahydrofolate + H(+). The protein operates within one-carbon metabolism; tetrahydrofolate interconversion. Its function is as follows. Catalyzes the oxidation of 5,10-methylenetetrahydrofolate to 5,10-methenyltetrahydrofolate and then the hydrolysis of 5,10-methenyltetrahydrofolate to 10-formyltetrahydrofolate. This is Bifunctional protein FolD from Prochlorococcus marinus (strain SARG / CCMP1375 / SS120).